The chain runs to 305 residues: Tyrosine recombinase XerC (305 aa).

The Core-binding (CB) domain maps to 4–95; the sequence is TSIQALINKW…AVKNFYRFLE (92 aa). Positions 116 to 298 constitute a Tyr recombinase domain; that stretch reads LLPKALSEDD…SIKHLEAVYT (183 aa). Residues Arg159, Lys182, His250, Arg253, and His276 contribute to the active site. The active-site O-(3'-phospho-DNA)-tyrosine intermediate is Tyr285.

This sequence belongs to the 'phage' integrase family. XerC subfamily. In terms of assembly, forms a cyclic heterotetrameric complex composed of two molecules of XerC and two molecules of XerD.

The protein localises to the cytoplasm. Site-specific tyrosine recombinase, which acts by catalyzing the cutting and rejoining of the recombining DNA molecules. The XerC-XerD complex is essential to convert dimers of the bacterial chromosome into monomers to permit their segregation at cell division. It also contributes to the segregational stability of plasmids. The polypeptide is Tyrosine recombinase XerC (Rickettsia conorii (strain ATCC VR-613 / Malish 7)).